Consider the following 605-residue polypeptide: Elongation factor 4 (605 aa).

A tr-type G domain is found at 11-193 (KNIRNFSIIA…RLVDVIPAPE (183 aa)). GTP contacts are provided by residues 23-28 (DHGKST) and 140-143 (NKID).

The protein belongs to the TRAFAC class translation factor GTPase superfamily. Classic translation factor GTPase family. LepA subfamily.

The protein resides in the cell inner membrane. The enzyme catalyses GTP + H2O = GDP + phosphate + H(+). Functionally, required for accurate and efficient protein synthesis under certain stress conditions. May act as a fidelity factor of the translation reaction, by catalyzing a one-codon backward translocation of tRNAs on improperly translocated ribosomes. Back-translocation proceeds from a post-translocation (POST) complex to a pre-translocation (PRE) complex, thus giving elongation factor G a second chance to translocate the tRNAs correctly. Binds to ribosomes in a GTP-dependent manner. This is Elongation factor 4 from Acinetobacter baylyi (strain ATCC 33305 / BD413 / ADP1).